We begin with the raw amino-acid sequence, 341 residues long: Methionine import ATP-binding protein MetN 3 (341 aa).

Residues 2–241 (ILLENVKKIY…PQQDITKRFV (240 aa)) form the ABC transporter domain. 38–45 (GYSGAGKS) lines the ATP pocket.

It belongs to the ABC transporter superfamily. Methionine importer (TC 3.A.1.24) family. The complex is composed of two ATP-binding proteins (MetN), two transmembrane proteins (MetI) and a solute-binding protein (MetQ).

It is found in the cell membrane. The enzyme catalyses L-methionine(out) + ATP + H2O = L-methionine(in) + ADP + phosphate + H(+). The catalysed reaction is D-methionine(out) + ATP + H2O = D-methionine(in) + ADP + phosphate + H(+). In terms of biological role, part of the ABC transporter complex MetNIQ involved in methionine import. Responsible for energy coupling to the transport system. In Bacillus cereus (strain ATCC 10987 / NRS 248), this protein is Methionine import ATP-binding protein MetN 3.